A 499-amino-acid polypeptide reads, in one-letter code: Cytochrome P450 monooxygenase ausI (499 aa).

The chain crosses the membrane as a helical span at residues 10-30; that stretch reads PLGQPLIAGFVVVSAVLYLLY. Residue Cys-439 coordinates heme. N-linked (GlcNAc...) asparagine glycosylation occurs at Asn-483.

Belongs to the cytochrome P450 family. Heme is required as a cofactor.

It localises to the membrane. It participates in secondary metabolite biosynthesis; terpenoid biosynthesis. Its function is as follows. Cytochrome P450 monooxygenase; part of the gene cluster B that mediates the biosynthesis of austinol and dehydroaustinol, two fungal meroterpenoids. The first step of the pathway is the synthesis of 3,5-dimethylorsellinic acid by the polyketide synthase ausA. 3,5-dimethylorsellinic acid is then prenylated by the polyprenyl transferase ausN. Further epoxidation by the FAD-dependent monooxygenase ausM and cyclization by the probable terpene cyclase ausL lead to the formation of protoaustinoid A. Protoaustinoid A is then oxidized to spiro-lactone preaustinoid A3 by the combined action of the FAD-binding monooxygenases ausB and ausC, and the dioxygenase ausE. Acid-catalyzed keto-rearrangement and ring contraction of the tetraketide portion of preaustinoid A3 by ausJ lead to the formation of preaustinoid A4. The aldo-keto reductase ausK, with the help of ausH, is involved in the next step by transforming preaustinoid A4 into isoaustinone which is in turn hydroxylated by the P450 monooxygenase ausI to form austinolide. Finally, the cytochrome P450 monooxygenase ausG modifies austinolide to austinol. Austinol can be further modified to dehydroaustinol which forms a diffusible complex with diorcinol that initiates conidiation. Due to genetic rearrangements of the clusters and the subsequent loss of some enzymes, the end products of the Emericella nidulans austinoid biosynthesis clusters are austinol and dehydroaustinol, even if additional enzymes, such as the O-acetyltransferase ausQ and the cytochrome P450 monooxygenase ausR are still functional. This is Cytochrome P450 monooxygenase ausI from Emericella nidulans (strain FGSC A4 / ATCC 38163 / CBS 112.46 / NRRL 194 / M139) (Aspergillus nidulans).